We begin with the raw amino-acid sequence, 1462 residues long: MFRGPKPPIAPKPRLTAPNEWRASVYLNDSLNKCSNGRLPCVDRGLDEGPRSIPKCSESETDEDYIVVPRVPLREDEPKDEGSVGNKALVSPESSAEEEEEREEGGEACGLEGTGAGEDSVAPAAPGAGALSREGEEGTDLALEDEGEGCADEPGTLEQVSRSEEEEKLVQPHRECSLEDSGPWAGEGVFQSDLLLPHIHGEDQEPPDTPGEAEEDDEEGCASTDPAGADEGSGPDRPTEDMGQDAEDTSEEPPEKEELAGVQEAETATDCPEVLEEGCEEATGVTGGEQVDLSEPPDHEKKTNQEVAAATLEDHAQDESAEESCQIVPFENDCMEDFVTSLTGSPYEFFPTESTSFCSESCSPLSESAKGLESEQAPKLGLRAEENPMVGALCGQCGSLQGGAAEGPAAPDVVVVLEEEALDDALANPYVMGVGLPGQAAPGEGGQAASDALGGYGSKEELNCEAEGGLVPADRKNTSTRVRPHSGKVAGYVPETVPEETGPEAGSSAPGIGGAAEEVGKTLLSLEGKPLEASRALPAKPRAFTLYPRSFSVEGREIPVSVYQEPEGSGLDDHRIKRKEDNLSLSCVIGSSGSFSQRNHLPSSGTSTPSSMVDIPPPFDLACITKKPITKSSPSLLIESDSPDKYKKKKSSFKRFLALTFKKKTENKLHVDVNVSSSRSSSESSYHGPSRILEVDRRSLSNSPQLKSRTGKLRASESPSSLIFYRDGKRKGVPFSRTVSRVESFEDRSRPPFLPLPLTKPRSISFPSADTSDYENIPAMNSDYENIQIPPRRPARAGAFTKLFEDQSRALSTANENDGYVDMSSFNAFESKQQSADQDAESAYTEPYKVCPISSAAPKEDLTSDEEQRSSEEEDSASRDPSVTHKVEGQSRALVIAQELLSSEKAYVEMLQHLNLDFHGAVMRALDDMDHEGRDTLAREELRQGLSELPAIHDLHQGILEELEERLSNWESQQKVADVFLAREQGFDHHATHILQFDRYLGLLSENCLHSPRLAAAVREFEQSVQGGSQTAKHRLLRVVQRLFQYQVLLTDYLNNLCPDSAEYDNTQGALSLISKVTDRANDSMEQGENLQKLVHIEHSVRGQGDLLQPGREFLKEGTLMKVTGKNRRPRHLFLMNDVLLYTYPQKDGKYRLKNTLAVANMKVSRPVMEKVPYALKIETSESCLMLSASSCAERDEWYGCLSRALPEDYKAQALAAFHHSVEIRERLGVSLGERPPTLVPVTHVMMCMNCGCDFSLTLRRHHCHACGKIVCRNCSRNKYPLKYLKDRMAKVCDGCFGELKKRGRAVPGLMRERPVSMSFPLSSPRFSGSAFSSVFQSINPSTFKKQKKVPSALTEVAASGEGSAISGYLSRCKRGKRHWKKLWFVIKGKVLYTYMASEDKVALESMPLLGFTIAPEKEEGSSEVGPIFHLYHKKTLFYSFKAEDTNSAQRWIEAMEDASVL.

Disordered stretches follow at residues 37-323 (GRLP…SAEE), 492-512 (YVPE…APGI), 592-613 (SGSF…SSMV), 670-718 (HVDV…ASES), 746-777 (EDRS…YENI), and 851-887 (CPIS…THKV). A compositionally biased stretch (basic and acidic residues) spans 72–82 (PLREDEPKDEG). Composition is skewed to acidic residues over residues 95–106 (SAEEEEEREEGG) and 137–151 (EGTD…EGCA). A compositionally biased stretch (basic and acidic residues) spans 161–177 (SRSEEEEKLVQPHRECS). Composition is skewed to acidic residues over residues 211–220 (GEAEEDDEEG) and 242–255 (MGQD…EPPE). Over residues 592–611 (SGSFSQRNHLPSSGTSTPSS) the composition is skewed to polar residues. Residues 676–685 (SSSRSSSESS) show a composition bias toward low complexity. Positions 858 to 887 (PKEDLTSDEEQRSSEEEDSASRDPSVTHKV) are enriched in basic and acidic residues. One can recognise a DH domain in the interval 892 to 1084 (RALVIAQELL…SKVTDRANDS (193 aa)). Residues 1113 to 1207 (EFLKEGTLMK…WYGCLSRALP (95 aa)) enclose the PH 1 domain. The FYVE-type zinc-finger motif lies at 1242-1301 (VTHVMMCMNCGCDFSLTLRRHHCHACGKIVCRNCSRNKYPLKYLKDRMAKVCDGCFGELK). Positions 1248, 1251, 1264, 1267, 1272, 1275, 1293, and 1296 each coordinate Zn(2+). Residues 1363 to 1461 (GSAISGYLSR…WIEAMEDASV (99 aa)) form the PH 2 domain.

In terms of tissue distribution, expressed in endothelial cells (at protein level).

The protein localises to the cytoplasm. Its subcellular location is the cytoskeleton. It localises to the cell projection. The protein resides in the ruffle membrane. It is found in the endoplasmic reticulum. The protein localises to the golgi apparatus. Its subcellular location is the early endosome. In terms of biological role, activates CDC42, a member of the Ras-like family of Rho- and Rac proteins, by exchanging bound GDP for free GTP. Mediates VEGF-induced CDC42 activation. May regulate proangiogenic action of VEGF in vascular endothelial cells, including network formation, directional movement and proliferation. May play a role in regulating the actin cytoskeleton and cell shape. The polypeptide is FYVE, RhoGEF and PH domain-containing protein 5 (FGD5) (Homo sapiens (Human)).